Here is a 77-residue protein sequence, read N- to C-terminus: Conotoxin VnMKLT1-012 (77 aa).

The signal sequence occupies residues 1–22 (MKLTCMMIVAVLFLTAWTFVTA). Positions 23 to 48 (DDSRNGLDYLFPKARHEMNPKASRDI) are excised as a propeptide. Intrachain disulfides connect C51-C68, C58-C72, and C67-C76.

The protein belongs to the conotoxin O1 superfamily. In terms of tissue distribution, expressed by the venom duct.

The protein localises to the secreted. The polypeptide is Conotoxin VnMKLT1-012 (Conus ventricosus (Mediterranean cone)).